A 110-amino-acid chain; its full sequence is UPF0060 membrane protein Bcep1808_1236 (110 aa).

The next 3 membrane-spanning stretches (helical) occupy residues 9–29, 34–54, and 66–86; these read ALFAVTAVAEIVGCYLPWLVL, PVWLLVPAALSLALFAWLLTL, and YGGVYIGVALLWLRVVDGVAL.

It belongs to the UPF0060 family.

The protein localises to the cell inner membrane. The chain is UPF0060 membrane protein Bcep1808_1236 from Burkholderia vietnamiensis (strain G4 / LMG 22486) (Burkholderia cepacia (strain R1808)).